The primary structure comprises 340 residues: Phenylalanine--tRNA ligase alpha subunit (340 aa).

Glu-255 provides a ligand contact to Mg(2+).

The protein belongs to the class-II aminoacyl-tRNA synthetase family. Phe-tRNA synthetase alpha subunit type 1 subfamily. As to quaternary structure, tetramer of two alpha and two beta subunits. Mg(2+) serves as cofactor.

Its subcellular location is the cytoplasm. It carries out the reaction tRNA(Phe) + L-phenylalanine + ATP = L-phenylalanyl-tRNA(Phe) + AMP + diphosphate + H(+). This chain is Phenylalanine--tRNA ligase alpha subunit, found in Syntrophomonas wolfei subsp. wolfei (strain DSM 2245B / Goettingen).